The following is a 340-amino-acid chain: Putative pyridoxal kinase C18.10 (340 aa).

Ser19 and Tyr130 together coordinate substrate. Residues 189 to 190 (TS) and 218 to 230 (QFPSLSGVFTGTG) each bind ATP. Asp231 is a binding site for substrate.

It belongs to the pyridoxine kinase family. A divalent metal cation is required as a cofactor.

The protein localises to the cytoplasm. It is found in the nucleus. The enzyme catalyses pyridoxal + ATP = pyridoxal 5'-phosphate + ADP + H(+). Required for synthesis of pyridoxal-5-phosphate from vitamin B6. The chain is Putative pyridoxal kinase C18.10 from Schizosaccharomyces pombe (strain 972 / ATCC 24843) (Fission yeast).